We begin with the raw amino-acid sequence, 1629 residues long: Ferredoxin-dependent glutamate synthase 2, chloroplastic (1629 aa).

Residues 1 to 107 (MALQSPGATG…LEDIISERGA (107 aa)) constitute a chloroplast transit peptide. Catalysis depends on Cys-108, which acts as the For GATase activity. The 400-residue stretch at 108–507 (CGVGFIANLE…PGMMISVDLE (400 aa)) folds into the Glutamine amidotransferase type-2 domain. Residue 1186–1243 (LAETQKTLIGNGLRERVIIRVDGGFKSGVDVLIAAAMGADEYGFGTLAMIATGCIMAR) coordinates FMN. 3 residues coordinate [3Fe-4S] cluster: Cys-1239, Cys-1245, and Cys-1250. Positions 1599 to 1629 (SEEDTPEANSDHILKTTTGDEEQVSSTLAEK) are disordered.

It belongs to the glutamate synthase family. It depends on [3Fe-4S] cluster as a cofactor. FAD serves as cofactor. The cofactor is FMN. As to expression, expressed predominantly in roots and slightly in leaves. Low expression in the leaf mesophyll and phloem companion cell-sieve element complex.

It localises to the plastid. Its subcellular location is the chloroplast stroma. It catalyses the reaction 2 oxidized [2Fe-2S]-[ferredoxin] + 2 L-glutamate = L-glutamine + 2 reduced [2Fe-2S]-[ferredoxin] + 2-oxoglutarate + 2 H(+). It functions in the pathway amino-acid biosynthesis; L-glutamate biosynthesis via GLT pathway; L-glutamate from 2-oxoglutarate and L-glutamine (ferredoxin route): step 1/1. The protein operates within energy metabolism; nitrogen metabolism. May play a role in primary nitrogen assimilation in roots. Could supply a constitutive level of glutamate to maintain a basal level of protein synthesis. The sequence is that of Ferredoxin-dependent glutamate synthase 2, chloroplastic (GLU2) from Arabidopsis thaliana (Mouse-ear cress).